Consider the following 132-residue polypeptide: Ribosome-binding factor A (132 aa).

This sequence belongs to the RbfA family. As to quaternary structure, monomer. Binds 30S ribosomal subunits, but not 50S ribosomal subunits or 70S ribosomes.

It is found in the cytoplasm. Its function is as follows. One of several proteins that assist in the late maturation steps of the functional core of the 30S ribosomal subunit. Associates with free 30S ribosomal subunits (but not with 30S subunits that are part of 70S ribosomes or polysomes). Required for efficient processing of 16S rRNA. May interact with the 5'-terminal helix region of 16S rRNA. The protein is Ribosome-binding factor A of Edwardsiella ictaluri (strain 93-146).